Reading from the N-terminus, the 380-residue chain is Cytochrome b (380 aa).

Transmembrane regions (helical) follow at residues 33–53, 77–98, 113–133, and 178–198; these read FGSL…FLAM, WLLR…YLHI, WNIG…GYVL, and FFTF…LHLL. Heme b-binding residues include His-83 and His-97. Positions 182 and 196 each coordinate heme b. A ubiquinone is bound at residue His-201. The next 4 membrane-spanning stretches (helical) occupy residues 226 to 246, 288 to 308, 320 to 340, and 347 to 367; these read YKDL…ALLN, LGGV…PVLH, PSQT…WIGG, and FIII…ILIP.

Belongs to the cytochrome b family. In terms of assembly, the cytochrome bc1 complex contains 3 respiratory subunits (MT-CYB, CYC1 and UQCRFS1), 2 core proteins (UQCRC1 and UQCRC2) and probably 6 low-molecular weight proteins. Requires heme b as cofactor.

The protein localises to the mitochondrion inner membrane. Component of the ubiquinol-cytochrome c reductase complex (complex III or cytochrome b-c1 complex) that is part of the mitochondrial respiratory chain. The b-c1 complex mediates electron transfer from ubiquinol to cytochrome c. Contributes to the generation of a proton gradient across the mitochondrial membrane that is then used for ATP synthesis. This Atractosteus spatula (Alligator gar) protein is Cytochrome b (mt-cyb).